The chain runs to 60 residues: Large ribosomal subunit protein uL30 (60 aa).

The protein belongs to the universal ribosomal protein uL30 family. As to quaternary structure, part of the 50S ribosomal subunit.

The protein is Large ribosomal subunit protein uL30 of Pediococcus pentosaceus (strain ATCC 25745 / CCUG 21536 / LMG 10740 / 183-1w).